A 233-amino-acid chain; its full sequence is Zinc metalloproteinase recombinant fibrinogenase II (233 aa).

The 197-residue stretch at 19–215 (KYVETVFVVD…HNPECIDNEP (197 aa)) folds into the Peptidase M12B domain. Residues Glu-22 and Asp-106 each contribute to the Ca(2+) site. 3 disulfide bridges follow: Cys-130-Cys-210, Cys-170-Cys-194, and Cys-172-Cys-177. His-155 contacts Zn(2+). Residue Glu-156 is part of the active site. Zn(2+)-binding residues include His-159 and His-165. N-linked (GlcNAc...) asparagine glycosylation is present at Asn-193. Positions 210, 213, 228, 230, and 232 each coordinate Ca(2+).

This sequence belongs to the venom metalloproteinase (M12B) family. P-III subfamily. Zn(2+) serves as cofactor. Expressed by the venom gland.

It is found in the secreted. With respect to regulation, inhibited by PMSF and EDTA. Slightly inhibited by Cu(2+) and Zn(2+). Not inhibited by aprotinin, SBTI, Ca(2+), Mg(2+), Na(+) and K(+). Functionally, snake venom zinc metalloprotease that acts at several levels. It has direct fibrino(geno)lytic activity (Aalpha chain of fibrinogen is cleaved quickly, Bbeta chain slowly, and gamma chain even more slowly) and degradation of TNF-alpha. These activities permit to protect against sepsis and disseminated intravascular coagulation. It inhibits ADP-induced platelet aggregation in human platelet-rich plasma (IC(50)=65.4 ug/ml). It decreases the activity of complement by degrading human C5, C6 and C9 in vitro, decreasing serum levels of C1q, C3 and C4 in rat, and inhibiting the MAC deposition on HUVECs membrane. This inhibition of complement protects against hyperacute rejection that is the main barrier in xenotransplantation. Has preference for Lys at the P1 position. Cleaves insulin B chain at '36-Val-|-Glu-37', '39-Leu-|-Tyr-40', and '48-Phe-|-Phe-49' bonds. Also cleaves fibronectin and type IV collagen. The protein is Zinc metalloproteinase recombinant fibrinogenase II of Deinagkistrodon acutus (Hundred-pace snake).